The primary structure comprises 510 residues: GMP synthase [glutamine-hydrolyzing] (510 aa).

The Glutamine amidotransferase type-1 domain maps to 5–195; that stretch reads LVFIIDFGGQ…LFNICELKGD (191 aa). The Nucleophile role is filled by cysteine 82. Residues histidine 169 and glutamate 171 contribute to the active site. The GMPS ATP-PPase domain occupies 196 to 385; it reads WSVTSFAEEK…LGIPHKLVWR (190 aa). 223-229 contributes to the ATP binding site; the sequence is SGGVDSS.

In terms of assembly, homodimer.

The catalysed reaction is XMP + L-glutamine + ATP + H2O = GMP + L-glutamate + AMP + diphosphate + 2 H(+). The protein operates within purine metabolism; GMP biosynthesis; GMP from XMP (L-Gln route): step 1/1. In terms of biological role, catalyzes the synthesis of GMP from XMP. The chain is GMP synthase [glutamine-hydrolyzing] from Clostridium tetani (strain Massachusetts / E88).